The primary structure comprises 158 residues: NAD(P)H-quinone oxidoreductase subunit N (158 aa).

It belongs to the complex I NdhN subunit family. As to quaternary structure, NDH-1 can be composed of about 15 different subunits; different subcomplexes with different compositions have been identified which probably have different functions.

The protein resides in the cellular thylakoid membrane. The enzyme catalyses a plastoquinone + NADH + (n+1) H(+)(in) = a plastoquinol + NAD(+) + n H(+)(out). The catalysed reaction is a plastoquinone + NADPH + (n+1) H(+)(in) = a plastoquinol + NADP(+) + n H(+)(out). In terms of biological role, NDH-1 shuttles electrons from an unknown electron donor, via FMN and iron-sulfur (Fe-S) centers, to quinones in the respiratory and/or the photosynthetic chain. The immediate electron acceptor for the enzyme in this species is believed to be plastoquinone. Couples the redox reaction to proton translocation, and thus conserves the redox energy in a proton gradient. Cyanobacterial NDH-1 also plays a role in inorganic carbon-concentration. The sequence is that of NAD(P)H-quinone oxidoreductase subunit N from Prochlorococcus marinus (strain MIT 9215).